The primary structure comprises 154 residues: Myoglobin (154 aa).

Residues 2–148 (VLTDAEWHLV…FRKDIAAKYK (147 aa)) enclose the Globin domain. Histidine 65 provides a ligand contact to nitrite. Histidine 65 is an O2 binding site. Residue threonine 68 is modified to Phosphothreonine. Position 94 (histidine 94) interacts with heme b.

Belongs to the globin family. As to quaternary structure, monomeric.

The protein localises to the cytoplasm. Its subcellular location is the sarcoplasm. It catalyses the reaction Fe(III)-heme b-[protein] + nitric oxide + H2O = Fe(II)-heme b-[protein] + nitrite + 2 H(+). The enzyme catalyses H2O2 + AH2 = A + 2 H2O. In terms of biological role, monomeric heme protein which primary function is to store oxygen and facilitate its diffusion within muscle tissues. Reversibly binds oxygen through a pentacoordinated heme iron and enables its timely and efficient release as needed during periods of heightened demand. Depending on the oxidative conditions of tissues and cells, and in addition to its ability to bind oxygen, it also has a nitrite reductase activity whereby it regulates the production of bioactive nitric oxide. Under stress conditions, like hypoxia and anoxia, it also protects cells against reactive oxygen species thanks to its pseudoperoxidase activity. This Balaenoptera physalus (Fin whale) protein is Myoglobin (MB).